Reading from the N-terminus, the 468-residue chain is ATP synthase subunit beta (468 aa).

153–160 is an ATP binding site; that stretch reads GGAGVGKT.

Belongs to the ATPase alpha/beta chains family. As to quaternary structure, F-type ATPases have 2 components, CF(1) - the catalytic core - and CF(0) - the membrane proton channel. CF(1) has five subunits: alpha(3), beta(3), gamma(1), delta(1), epsilon(1). CF(0) has three main subunits: a(1), b(2) and c(9-12). The alpha and beta chains form an alternating ring which encloses part of the gamma chain. CF(1) is attached to CF(0) by a central stalk formed by the gamma and epsilon chains, while a peripheral stalk is formed by the delta and b chains.

The protein localises to the cell membrane. The enzyme catalyses ATP + H2O + 4 H(+)(in) = ADP + phosphate + 5 H(+)(out). In terms of biological role, produces ATP from ADP in the presence of a proton gradient across the membrane. The catalytic sites are hosted primarily by the beta subunits. This chain is ATP synthase subunit beta, found in Ligilactobacillus salivarius (strain UCC118) (Lactobacillus salivarius).